A 100-amino-acid chain; its full sequence is MKMSRLCLSVALLVLLGTLAASTPGCDTSNQAKAQRPDFCLEPPYTGPCKARIIRYFYNAKAGLCQTFVYGGCRAKRNNFKSAEDCMRTCGGAIGPWENL.

A signal peptide spans 1 to 21 (MKMSRLCLSVALLVLLGTLAA). Positions 22–35 (STPGCDTSNQAKAQ) are excised as a propeptide. In terms of domain architecture, BPTI/Kunitz inhibitor spans 40–90 (CLEPPYTGPCKARIIRYFYNAKAGLCQTFVYGGCRAKRNNFKSAEDCMRTC). Cystine bridges form between Cys40-Cys90, Cys49-Cys73, and Cys65-Cys86. Residues 94 to 100 (IGPWENL) constitute a propeptide that is removed on maturation.

It is found in the secreted. Its function is as follows. Inhibits trypsin, kallikrein, chymotrypsin, and plasmin. This is Pancreatic trypsin inhibitor from Bos taurus (Bovine).